We begin with the raw amino-acid sequence, 416 residues long: MGYDDRERDRERRRHRSRSRDRHRERSRDRRHHRNSRRKPSLYWDVPPPGFEHITPMQYKAMQASGQIPASVVPDTPQTAVPVVGSTITRQARRLYVGNIPFGVTEEEMMEFFNQQMHLVGLAQAAGSPVLACQINLDKNFAFLEFRSIDETTQAMAFDGINLKGQSLKIRRPHDYQPMPGITDTPAIKPAVVSSGVISTVVPDSPHKIFIGGLPNYLNDDQVKELLLSFGKLRAFNLVKDAATGLSKGYAFCEYVDLSITDQSIAGLNGMQLGDKKLIVQRASVGAKNAQNAANTTQSVMLQVPGLSNVVTSGPPTEVLCLLNMVTPDELRDEEEYEDILEDIKEECTKYGVVRSVEIPRPIEGVEVPGCGKVFVEFNSVLDCQKAQQALTGRKFSDRVVVTSYFDPDKYHRREF.

Over residues 1 to 10 (MGYDDRERDR) the composition is skewed to basic and acidic residues. A disordered region spans residues 1–47 (MGYDDRERDRERRRHRSRSRDRHRERSRDRRHHRNSRRKPSLYWDVP). 2 stretches are compositionally biased toward basic residues: residues 11–21 (ERRRHRSRSRD) and 29–40 (DRRHHRNSRRKP). RRM domains follow at residues 93–175 (RRLY…RPHD), 207–285 (HKIF…RASV), and 318–408 (EVLC…YFDP).

This sequence belongs to the splicing factor SR family. As to quaternary structure, forms a heterodimer with the U2AF small subunit.

The protein resides in the nucleus. Necessary for the splicing of pre-mRNA. Binds to the polypyrimidine tract of introns early during spliceosome assembly. This is Splicing factor U2AF 50 kDa subunit (U2af50) from Drosophila melanogaster (Fruit fly).